A 682-amino-acid chain; its full sequence is DNA ligase (682 aa).

NAD(+) contacts are provided by residues 42–46 (DAEYD), 91–92 (SL), and glutamate 124. Lysine 126 serves as the catalytic N6-AMP-lysine intermediate. Residues arginine 147, glutamate 184, lysine 302, and lysine 326 each contribute to the NAD(+) site. Zn(2+) contacts are provided by cysteine 420, cysteine 423, cysteine 438, and cysteine 444. The BRCT domain occupies 603–682 (IADNPLKGKS…QEFIALTGEN (80 aa)).

It belongs to the NAD-dependent DNA ligase family. LigA subfamily. The cofactor is Mg(2+). Mn(2+) is required as a cofactor.

It catalyses the reaction NAD(+) + (deoxyribonucleotide)n-3'-hydroxyl + 5'-phospho-(deoxyribonucleotide)m = (deoxyribonucleotide)n+m + AMP + beta-nicotinamide D-nucleotide.. In terms of biological role, DNA ligase that catalyzes the formation of phosphodiester linkages between 5'-phosphoryl and 3'-hydroxyl groups in double-stranded DNA using NAD as a coenzyme and as the energy source for the reaction. It is essential for DNA replication and repair of damaged DNA. The chain is DNA ligase from Actinobacillus pleuropneumoniae serotype 3 (strain JL03).